The following is a 354-amino-acid chain: DNA integrity scanning protein DisA (354 aa).

The DAC domain maps to 6–144 (EKELKSILKL…GHIKYVLRDS (139 aa)). Residues G73, L91, and 104 to 108 (TRHRT) each bind ATP.

This sequence belongs to the DisA family. As to quaternary structure, homooctamer. The cofactor is Mg(2+).

It catalyses the reaction 2 ATP = 3',3'-c-di-AMP + 2 diphosphate. Its function is as follows. Participates in a DNA-damage check-point that is active prior to asymmetric division when DNA is damaged. DisA forms globular foci that rapidly scan along the chromosomes during sporulation, searching for lesions. When a lesion is present, DisA pauses at the lesion site. This triggers a cellular response that culminates in a temporary block in sporulation initiation. Functionally, also has diadenylate cyclase activity, catalyzing the condensation of 2 ATP molecules into cyclic di-AMP (c-di-AMP). c-di-AMP acts as a signaling molecule that couples DNA integrity with progression of sporulation. The rise in c-di-AMP level generated by DisA while scanning the chromosome, operates as a positive signal that advances sporulation; upon encountering a lesion, the DisA focus arrests at the damaged site and halts c-di-AMP synthesis. The polypeptide is DNA integrity scanning protein DisA (Clostridium kluyveri (strain ATCC 8527 / DSM 555 / NBRC 12016 / NCIMB 10680 / K1)).